The following is a 477-amino-acid chain: Aspartyl/glutamyl-tRNA(Asn/Gln) amidotransferase subunit B (477 aa).

The protein belongs to the GatB/GatE family. GatB subfamily. In terms of assembly, heterotrimer of A, B and C subunits.

It catalyses the reaction L-glutamyl-tRNA(Gln) + L-glutamine + ATP + H2O = L-glutaminyl-tRNA(Gln) + L-glutamate + ADP + phosphate + H(+). The catalysed reaction is L-aspartyl-tRNA(Asn) + L-glutamine + ATP + H2O = L-asparaginyl-tRNA(Asn) + L-glutamate + ADP + phosphate + 2 H(+). In terms of biological role, allows the formation of correctly charged Asn-tRNA(Asn) or Gln-tRNA(Gln) through the transamidation of misacylated Asp-tRNA(Asn) or Glu-tRNA(Gln) in organisms which lack either or both of asparaginyl-tRNA or glutaminyl-tRNA synthetases. The reaction takes place in the presence of glutamine and ATP through an activated phospho-Asp-tRNA(Asn) or phospho-Glu-tRNA(Gln). This Lactococcus lactis subsp. cremoris (strain MG1363) protein is Aspartyl/glutamyl-tRNA(Asn/Gln) amidotransferase subunit B.